A 153-amino-acid chain; its full sequence is 4'-phosphopantetheinyl transferase B, mitochondrial (153 aa).

Belongs to the P-Pant transferase superfamily.

It localises to the mitochondrion. It carries out the reaction apo-[ACP] + CoA = holo-[ACP] + adenosine 3',5'-bisphosphate + H(+). Its function is as follows. Acyl-carrier-protein synthase transfers the 4'-phosphopantetheine moiety from coenzyme A to a Ser of an acyl-carrier-protein. The 4'-phosphopantetheine (4'-PPT) portion of CoA provides the essential prosthetic group for a number of carrier proteins and multi-domain enzymes, priming them for the acceptance of acyl building blocks in fatty acid synthesis and many aspects of secondary metabolism mediated by polyketide synthases (PKSs) and non-ribosomal peptide synthetases (NRPSs). PptB is specific for the mitochondrial acyl carrier protein acpA. The sequence is that of 4'-phosphopantetheinyl transferase B, mitochondrial from Aspergillus fumigatus (strain ATCC MYA-4609 / CBS 101355 / FGSC A1100 / Af293) (Neosartorya fumigata).